Consider the following 128-residue polypeptide: Large ribosomal subunit protein bL20 (128 aa).

It belongs to the bacterial ribosomal protein bL20 family.

Its function is as follows. Binds directly to 23S ribosomal RNA and is necessary for the in vitro assembly process of the 50S ribosomal subunit. It is not involved in the protein synthesizing functions of that subunit. The chain is Large ribosomal subunit protein bL20 from Micrococcus luteus (strain ATCC 4698 / DSM 20030 / JCM 1464 / CCM 169 / CCUG 5858 / IAM 1056 / NBRC 3333 / NCIMB 9278 / NCTC 2665 / VKM Ac-2230) (Micrococcus lysodeikticus).